Here is a 453-residue protein sequence, read N- to C-terminus: Ribulose bisphosphate carboxylase large chain (453 aa).

The propeptide occupies 1–2 (MS). The residue at position 3 (P3) is an N-acetylproline. K14 is subject to N6,N6,N6-trimethyllysine. The substrate site is built by N123 and T173. The active-site Proton acceptor is the K175. Substrate is bound at residue K177. The Mg(2+) site is built by K201, D203, and E204. An N6-carboxylysine modification is found at K201. The active-site Proton acceptor is H294. Positions 295, 327, and 379 each coordinate substrate.

The protein belongs to the RuBisCO large chain family. Type I subfamily. Heterohexadecamer of 8 large chains and 8 small chains; disulfide-linked. The disulfide link is formed within the large subunit homodimers. Mg(2+) serves as cofactor. In terms of processing, the disulfide bond which can form in the large chain dimeric partners within the hexadecamer appears to be associated with oxidative stress and protein turnover.

It is found in the plastid. The protein localises to the chloroplast. It catalyses the reaction 2 (2R)-3-phosphoglycerate + 2 H(+) = D-ribulose 1,5-bisphosphate + CO2 + H2O. It carries out the reaction D-ribulose 1,5-bisphosphate + O2 = 2-phosphoglycolate + (2R)-3-phosphoglycerate + 2 H(+). Functionally, ruBisCO catalyzes two reactions: the carboxylation of D-ribulose 1,5-bisphosphate, the primary event in carbon dioxide fixation, as well as the oxidative fragmentation of the pentose substrate in the photorespiration process. Both reactions occur simultaneously and in competition at the same active site. The chain is Ribulose bisphosphate carboxylase large chain from Hydnophytum formicarum (Ant plant).